The chain runs to 807 residues: Tyrosine-protein phosphatase non-receptor type 22 (807 aa).

In terms of domain architecture, Tyrosine-protein phosphatase spans 24–289; it reads FANEFLKLKR…ELVYNAVLEL (266 aa). At Ser-35 the chain carries Phosphoserine; by PKC/PRKCD. Cys-129 and Cys-227 are oxidised to a cystine. The active-site Phosphocysteine intermediate is Cys-227. Residues 227–233 and Gln-274 each bind substrate; that span reads CSAGCGR. Ser-449, Ser-635, Ser-684, and Ser-692 each carry phosphoserine. Disordered regions lie at residues 676 to 700 and 724 to 746; these read SVKL…LPER and SYPD…GKSF.

The protein belongs to the protein-tyrosine phosphatase family. Non-receptor class 4 subfamily. In terms of assembly, interacts with CSK. Interacts with LPXN. Interacts with CBL. Interacts with TRAF3 (via MATH domain); the interaction promotes TRAF3 polyubiquitination. Phosphorylation on Ser-35 by PKC/PRKCD abrogates its ability to dephosphorylate and inactivate the SRC family kinases. As to expression, expressed in bone marrow, B and T-cells, PBMCs, natural killer cells, monocytes, dendritic cells and neutrophils. Both isoform 1 and 4 are predominantly expressed in lymphoid tissues and cells. Isoform 1 is expressed in thymocytes and both mature B and T-cells.

Its subcellular location is the cytoplasm. The enzyme catalyses O-phospho-L-tyrosyl-[protein] + H2O = L-tyrosyl-[protein] + phosphate. It catalyses the reaction N-(5Z,8Z,11Z,14Z-eicosatetraenoyl)-ethanolamine phosphate + H2O = N-(5Z,8Z,11Z,14Z-eicosatetraenoyl)-ethanolamine + phosphate. Down-regulated by phosphorylation. Its function is as follows. Acts as a negative regulator of T-cell receptor (TCR) signaling by direct dephosphorylation of the Src family kinases LCK and FYN, ITAMs of the TCRz/CD3 complex, as well as ZAP70, VAV, VCP and other key signaling molecules. Associates with and probably dephosphorylates CBL. Dephosphorylates LCK at its activating 'Tyr-394' residue. Dephosphorylates ZAP70 at its activating 'Tyr-493' residue. Dephosphorylates the immune system activator SKAP2. Positively regulates toll-like receptor (TLR)-induced type 1 interferon production. Promotes host antiviral responses mediated by type 1 interferon. Regulates NOD2-induced pro-inflammatory cytokine secretion and autophagy. Acts as an activator of NLRP3 inflammasome assembly by mediating dephosphorylation of 'Tyr-861' of NLRP3. Dephosphorylates phospho-anandamide (p-AEA), an endocannabinoid to anandamide (also called N-arachidonoylethanolamide). In Homo sapiens (Human), this protein is Tyrosine-protein phosphatase non-receptor type 22 (PTPN22).